The primary structure comprises 819 residues: DNA topoisomerase 4 subunit A (819 aa).

The Topo IIA-type catalytic domain occupies 30–496; that stretch reads LPDIRDGLKP…QIIEIDTASL (467 aa). The active-site O-(5'-phospho-DNA)-tyrosine intermediate is tyrosine 118.

It belongs to the type II topoisomerase GyrA/ParC subunit family. ParC type 2 subfamily. In terms of assembly, heterotetramer composed of ParC and ParE.

The protein resides in the cell membrane. It carries out the reaction ATP-dependent breakage, passage and rejoining of double-stranded DNA.. Functionally, topoisomerase IV is essential for chromosome segregation. It relaxes supercoiled DNA. Performs the decatenation events required during the replication of a circular DNA molecule. The protein is DNA topoisomerase 4 subunit A of Streptococcus pyogenes serotype M1.